Here is a 247-residue protein sequence, read N- to C-terminus: Cell division protein ZapD (247 aa).

This sequence belongs to the ZapD family. Interacts with FtsZ.

Its subcellular location is the cytoplasm. Cell division factor that enhances FtsZ-ring assembly. Directly interacts with FtsZ and promotes bundling of FtsZ protofilaments, with a reduction in FtsZ GTPase activity. This is Cell division protein ZapD from Salmonella arizonae (strain ATCC BAA-731 / CDC346-86 / RSK2980).